The sequence spans 368 residues: Protein trichome birefringence-like 43 (368 aa).

Residues 9 to 25 (GVVSVMVLMILVLLKQI) traverse the membrane as a helical; Signal-anchor for type II membrane protein segment. The GDS motif motif lies at 117–119 (GDS). A DCXHWCLPGXXDXWN motif motif is present at residues 344–358 (DCSHWCLSGVPDSWN).

It belongs to the PC-esterase family. TBL subfamily.

It localises to the membrane. Its function is as follows. May act as a bridging protein that binds pectin and other cell wall polysaccharides. Probably involved in maintaining esterification of pectins. May be involved in the specific O-acetylation of cell wall polymers. The sequence is that of Protein trichome birefringence-like 43 (TBL43) from Arabidopsis thaliana (Mouse-ear cress).